We begin with the raw amino-acid sequence, 78 residues long: Protein SlyX homolog (78 aa).

Belongs to the SlyX family.

This is Protein SlyX homolog from Xanthomonas euvesicatoria pv. vesicatoria (strain 85-10) (Xanthomonas campestris pv. vesicatoria).